Consider the following 465-residue polypeptide: tRNA modification GTPase MnmE (465 aa).

(6S)-5-formyl-5,6,7,8-tetrahydrofolate is bound by residues R25, E87, and R126. The TrmE-type G domain occupies 222–386; the sequence is TIRVVLRGLP…LIERLVQFAE (165 aa). Residues 232–237, 251–257, and 276–279 contribute to the GTP site; these read NAGKSR, TDQAGTT, and DTAG. Mg(2+) contacts are provided by S236 and T257. K465 provides a ligand contact to (6S)-5-formyl-5,6,7,8-tetrahydrofolate.

This sequence belongs to the TRAFAC class TrmE-Era-EngA-EngB-Septin-like GTPase superfamily. TrmE GTPase family. Homodimer. Heterotetramer of two MnmE and two MnmG subunits. Requires K(+) as cofactor.

It localises to the cytoplasm. In terms of biological role, exhibits a very high intrinsic GTPase hydrolysis rate. Involved in the addition of a carboxymethylaminomethyl (cmnm) group at the wobble position (U34) of certain tRNAs, forming tRNA-cmnm(5)s(2)U34. The polypeptide is tRNA modification GTPase MnmE (Rhodopirellula baltica (strain DSM 10527 / NCIMB 13988 / SH1)).